Consider the following 275-residue polypeptide: 4-diphosphocytidyl-2-C-methyl-D-erythritol kinase (275 aa).

Residue K14 is part of the active site. An ATP-binding site is contributed by 98–108 (PMGAGLGGGSS). D140 is an active-site residue.

Belongs to the GHMP kinase family. IspE subfamily.

It catalyses the reaction 4-CDP-2-C-methyl-D-erythritol + ATP = 4-CDP-2-C-methyl-D-erythritol 2-phosphate + ADP + H(+). It participates in isoprenoid biosynthesis; isopentenyl diphosphate biosynthesis via DXP pathway; isopentenyl diphosphate from 1-deoxy-D-xylulose 5-phosphate: step 3/6. In terms of biological role, catalyzes the phosphorylation of the position 2 hydroxy group of 4-diphosphocytidyl-2C-methyl-D-erythritol. This Francisella tularensis subsp. tularensis (strain FSC 198) protein is 4-diphosphocytidyl-2-C-methyl-D-erythritol kinase.